Here is a 325-residue protein sequence, read N- to C-terminus: Diacylglycerol acyltransferase/mycolyltransferase Ag85B (325 aa).

A signal peptide spans 1–40 (MTDVSGKIRAWGRRLLVGAAAAAALPGLVGLAGGAATAGA). 82–83 (LR) lines the substrate pocket. Residues 98–108 (FEWYYQSGLSV) are fibronectin-binding. Residues Cys127 and Cys132 are joined by a disulfide bond. Residues Ser166 and Asp194 each coordinate substrate. Catalysis depends on Ser166, which acts as the Nucleophile. Glu270 is an active-site residue. Substrate is bound by residues 272–275 (FVRS), Lys279, and 302–304 (HSW). Residue His302 is part of the active site.

This sequence belongs to the mycobacterial A85 antigen family.

The protein localises to the secreted. It carries out the reaction 2 alpha,alpha'-trehalose 6-mycolate = alpha,alpha'-trehalose 6,6'-bismycolate + alpha,alpha-trehalose. The enzyme catalyses an acyl-CoA + a 1,2-diacyl-sn-glycerol = a triacyl-sn-glycerol + CoA. In terms of biological role, the antigen 85 proteins (FbpA, FbpB, FbpC) are responsible for the high affinity of mycobacteria for fibronectin, a large adhesive glycoprotein, which facilitates the attachment of M.tuberculosis to murine alveolar macrophages (AMs). They also help to maintain the integrity of the cell wall by catalyzing the transfer of mycolic acids to cell wall arabinogalactan and through the synthesis of alpha,alpha-trehalose dimycolate (TDM, cord factor). They catalyze the transfer of a mycoloyl residue from one molecule of alpha,alpha-trehalose monomycolate (TMM) to another TMM, leading to the formation of TDM. In Mycobacterium kansasii, this protein is Diacylglycerol acyltransferase/mycolyltransferase Ag85B (fbpB).